We begin with the raw amino-acid sequence, 1240 residues long: MGKEDEKESGRDKMKSFGSIRSIFMHADGVDWILMALGLIGAVGDGFITPVVVFIFNTLLNNLGTSSSNNKTFMQTISKNVVALLYVACGSWVICFLEGYCWTRTGERQAARMREKYLRAVLRQDVGYFDLHVTSTSDVITSISSDSLVIQDFLSEKLPNFLMNASAFVASYIVSFILMWRLTIVGFPFIILLLVPGLMYGRALVSISRKIHEQYNEAGSIAEQAISSVRTVYAFGSENKMIGKFSTALRGSVKLGLRQGLAKGITIGSNGVTHAIWAFLTWYGSRLVMNHGSKGGTVFVVISCITYGGVSLGQSLSNLKYFSEAFVAWERILEVIKRVPDIDSNKKEGQILERMKGEVEFNHVKFTYLSRPETTIFDDLCLKIPAGKTVALVGGSGSGKSTVISLLQRFYDPIAGEILIDGVSIDKLQVNWLRSQMGLVSQEPVLFATSITENILFGKEDASLDEVVEAAKASNAHTFISQFPLGYKTQVGERGVQMSGGQKQRIAIARAIIKSPKILLLDEATSALDSESERVVQESLDNASIGRTTIVIAHRLSTIRNADVICVIHNGQIVETGSHEELLKRIDGQYTSLVSLQQMENEESNVNINVSVTKDQVMSLSKDFKYSQHNSIGSTSSSIVTNVSDLIPNDNQPLVPSFTRLMVMNRPEWKHALYGCLSAALVGVLQPVSAYSAGSVISVFFLTSHDQIKEKTRIYVLLFVGLAIFSFLVNISQHYGFAYMGEYLTKRIREQMLSKILTFEVNWFDIDDNSSGAICSRLAKDANVVRSMVGDRMSLLVQTISAVIIACIIGLVIAWRLAIVMISVQPLIVVCFYTQRVLLKSLSEKASKAQDESSKLAAEAVSNIRTITAFSSQERIIKLLKKVQEGPRRESVHRSWLAGIVLGTSRSLITCTSALNFWYGGRLIADGKIVSKAFFEIFLIFVTTGRVIADAGTMTTDLARGLDAVGSVFAVLDRCTTIEPKNPDGYVAEKIKGQITFLNVDFAYPTRPDVVIFENFSIEIDEGKSTAIVGTSGSGKSTIIGLIERFYDPLKGTVKIDGRDIRSYHLRSLRKYISLVSQEPMLFAGTIRENIMYGGTSDKIDESEIIEAAKAANAHDFITSLSNGYDTNCGDKGVQLSGGQKQRIAIARAVLKNPSVLLLDEATSALDSKSERVVQDALERVMVGRTSIMIAHRLSTIQNCDMIVVLGKGKIVESGTHSSLLEKGPTGTYFSLAGIQRTLC.

Residues 35–324 form the ABC transmembrane type-1 1 domain; sequence MALGLIGAVG…SLSNLKYFSE (290 aa). The helical transmembrane segment at 36 to 56 threads the bilayer; that stretch reads ALGLIGAVGDGFITPVVVFIF. Asn70 carries an N-linked (GlcNAc...) asparagine glycan. The next 5 membrane-spanning stretches (helical) occupy residues 81–101, 158–180, 184–206, 264–284, and 296–316; these read VVAL…EGYC, LPNF…ILMW, IVGF…ALVS, GITI…TWYG, and GTVF…GQSL. The region spanning 359–595 is the ABC transporter 1 domain; it reads VEFNHVKFTY…IDGQYTSLVS (237 aa). 394-401 contributes to the ATP binding site; that stretch reads GGSGSGKS. Residues Asn542, Asn609, and Asn642 are each glycosylated (N-linked (GlcNAc...) asparagine). One can recognise an ABC transmembrane type-1 2 domain in the interval 672 to 960; it reads ALYGCLSAAL…AGTMTTDLAR (289 aa). Helical transmembrane passes span 681–701 and 714–734; these read LVGV…SVFF and IYVL…ISQH. The N-linked (GlcNAc...) asparagine glycan is linked to Asn769. 4 helical membrane-spanning segments follow: residues 793 to 815, 817 to 839, 896 to 919, and 923 to 943; these read MSLL…VIAW, LAIV…RVLL, WLAG…NFWY, and LIAD…IFVT. In terms of domain architecture, ABC transporter 2 spans 995 to 1233; the sequence is ITFLNVDFAY…GPTGTYFSLA (239 aa). A glycan (N-linked (GlcNAc...) asparagine) is linked at Asn1015. Residue 1030 to 1037 coordinates ATP; the sequence is GTSGSGKS.

Belongs to the ABC transporter superfamily. ABCB family. Multidrug resistance exporter (TC 3.A.1.201) subfamily.

It localises to the membrane. This is ABC transporter B family member 17 (ABCB17) from Arabidopsis thaliana (Mouse-ear cress).